The sequence spans 717 residues: DNA-binding protein RFX2 (717 aa).

Residues 1–28 form a disordered region; the sequence is MQNSEGGADSPASVALRPAAQPMPASPQ. Ser26 is modified (phosphoserine). The segment at residues 194-269 is a DNA-binding region (RFX-type winged-helix); sequence HLQWLLDNYE…YHYYGIRLKP (76 aa). The tract at residues 286 to 318 is disordered; sequence RQQPTHQKPRYRPAQKSDSLGDGSAHSNMHGMP. Position 411 is a phosphoserine (Ser411). The segment covering 685–710 has biased composition (basic and acidic residues); sequence DGHSSEADVDGRSLGEPLVKRERSDP. Residues 685 to 717 are disordered; sequence DGHSSEADVDGRSLGEPLVKRERSDPSHPLQGI.

Belongs to the RFX family. Homodimer; probably only forms homodimers in testis. Heterodimer; heterodimerizes with RFX1 and RFX3.

The protein localises to the nucleus. The protein resides in the cytoplasm. In terms of biological role, transcription factor that acts as a key regulator of spermatogenesis. Acts by regulating expression of genes required for the haploid phase during spermiogenesis, such as genes required for cilium assembly and function. Recognizes and binds the X-box, a regulatory motif with DNA sequence 5'-GTNRCC(0-3N)RGYAAC-3' present on promoters. Probably activates transcription of the testis-specific histone gene H1-6. The polypeptide is DNA-binding protein RFX2 (Rfx2) (Mus musculus (Mouse)).